A 122-amino-acid chain; its full sequence is NADH-quinone oxidoreductase subunit A (122 aa).

3 consecutive transmembrane segments (helical) span residues 10-30 (LIVF…LTIG), 67-87 (FALL…WAVV), and 91-111 (LGLF…IGLI).

Belongs to the complex I subunit 3 family. NDH-1 is composed of 14 different subunits. Subunits NuoA, H, J, K, L, M, N constitute the membrane sector of the complex.

It localises to the cell membrane. The enzyme catalyses a quinone + NADH + 5 H(+)(in) = a quinol + NAD(+) + 4 H(+)(out). Functionally, NDH-1 shuttles electrons from NADH, via FMN and iron-sulfur (Fe-S) centers, to quinones in the respiratory chain. The immediate electron acceptor for the enzyme in this species is believed to be a menaquinone. Couples the redox reaction to proton translocation (for every two electrons transferred, four hydrogen ions are translocated across the cytoplasmic membrane), and thus conserves the redox energy in a proton gradient. In Geobacillus thermodenitrificans (strain NG80-2), this protein is NADH-quinone oxidoreductase subunit A.